Reading from the N-terminus, the 175-residue chain is Gamma-crystallin B (175 aa).

2 consecutive Beta/gamma crystallin 'Greek key' domains span residues 2–40 and 41–83; these read GKITFFEDRSFQGRCYECSSDCPNLQTYFSRCNSVRVDS and GCWM…CLIP. A connecting peptide region spans residues 84 to 88; sequence QHSGT. Beta/gamma crystallin 'Greek key' domains are found at residues 89 to 129 and 130 to 172; these read YRMR…NVME and GCWV…RRVM.

It belongs to the beta/gamma-crystallin family.

Crystallins are the dominant structural components of the vertebrate eye lens. The chain is Gamma-crystallin B (Crygb) from Mus musculus (Mouse).